Here is a 776-residue protein sequence, read N- to C-terminus: DNA topoisomerase 1 (776 aa).

In terms of domain architecture, Toprim spans M1–V111. Mg(2+) is bound by residues E7 and D80. The Topo IA-type catalytic domain maps to D132–E568. Residues S166 to Q171 are interaction with DNA. Y304 acts as the O-(5'-phospho-DNA)-tyrosine intermediate in catalysis. The C4-type zinc finger occupies C600 to C627.

This sequence belongs to the type IA topoisomerase family. In terms of assembly, monomer. The cofactor is Mg(2+).

It catalyses the reaction ATP-independent breakage of single-stranded DNA, followed by passage and rejoining.. Functionally, releases the supercoiling and torsional tension of DNA, which is introduced during the DNA replication and transcription, by transiently cleaving and rejoining one strand of the DNA duplex. Introduces a single-strand break via transesterification at a target site in duplex DNA. The scissile phosphodiester is attacked by the catalytic tyrosine of the enzyme, resulting in the formation of a DNA-(5'-phosphotyrosyl)-enzyme intermediate and the expulsion of a 3'-OH DNA strand. The free DNA strand then undergoes passage around the unbroken strand, thus removing DNA supercoils. Finally, in the religation step, the DNA 3'-OH attacks the covalent intermediate to expel the active-site tyrosine and restore the DNA phosphodiester backbone. In Rickettsia conorii (strain ATCC VR-613 / Malish 7), this protein is DNA topoisomerase 1.